An 88-amino-acid polypeptide reads, in one-letter code: Large ribosomal subunit protein eL37A (88 aa).

The Zn(2+) site is built by Cys-19, Cys-22, Cys-34, and Cys-37. Residues 19–37 (CNRCGRRSFHVQKKTCSSC) form a C4-type zinc finger.

This sequence belongs to the eukaryotic ribosomal protein eL37 family. As to quaternary structure, component of the large ribosomal subunit (LSU). Mature yeast ribosomes consist of a small (40S) and a large (60S) subunit. The 40S small subunit contains 1 molecule of ribosomal RNA (18S rRNA) and 33 different proteins (encoded by 57 genes). The large 60S subunit contains 3 rRNA molecules (25S, 5.8S and 5S rRNA) and 46 different proteins (encoded by 81 genes). The cofactor is Zn(2+).

Its subcellular location is the cytoplasm. In terms of biological role, component of the ribosome, a large ribonucleoprotein complex responsible for the synthesis of proteins in the cell. The small ribosomal subunit (SSU) binds messenger RNAs (mRNAs) and translates the encoded message by selecting cognate aminoacyl-transfer RNA (tRNA) molecules. The large subunit (LSU) contains the ribosomal catalytic site termed the peptidyl transferase center (PTC), which catalyzes the formation of peptide bonds, thereby polymerizing the amino acids delivered by tRNAs into a polypeptide chain. The nascent polypeptides leave the ribosome through a tunnel in the LSU and interact with protein factors that function in enzymatic processing, targeting, and the membrane insertion of nascent chains at the exit of the ribosomal tunnel. The chain is Large ribosomal subunit protein eL37A from Saccharomyces cerevisiae (strain ATCC 204508 / S288c) (Baker's yeast).